The primary structure comprises 291 residues: Protease HtpX homolog (291 aa).

2 helical membrane-spanning segments follow: residues 4-24 and 38-58; these read VVLF…SARV and MGML…ISLL. Residue H144 participates in Zn(2+) binding. E145 is an active-site residue. Position 148 (H148) interacts with Zn(2+). The next 2 membrane-spanning stretches (helical) occupy residues 159 to 179 and 199 to 219; these read LIQG…AYAI and ISSI…VMYF. Residue E224 participates in Zn(2+) binding.

This sequence belongs to the peptidase M48B family. Requires Zn(2+) as cofactor.

It localises to the cell inner membrane. In Chlorobium phaeobacteroides (strain DSM 266 / SMG 266 / 2430), this protein is Protease HtpX homolog.